A 451-amino-acid polypeptide reads, in one-letter code: UPF0210 protein NMB1652 (451 aa).

It belongs to the UPF0210 family. In terms of assembly, homodimer.

The polypeptide is UPF0210 protein NMB1652 (Neisseria meningitidis serogroup B (strain ATCC BAA-335 / MC58)).